The primary structure comprises 98 residues: NADH-ubiquinone oxidoreductase chain 4L (98 aa).

3 helical membrane-spanning segments follow: residues 2 to 22 (PSIFTNIILAFATALLGTLVF), 29 to 49 (SLLCLEGMMLSMFVLSTLIIL), and 61 to 81 (ILLLVFAACEAAVGLALLVMV).

The protein belongs to the complex I subunit 4L family. As to quaternary structure, core subunit of respiratory chain NADH dehydrogenase (Complex I) which is composed of 45 different subunits.

It localises to the mitochondrion inner membrane. The catalysed reaction is a ubiquinone + NADH + 5 H(+)(in) = a ubiquinol + NAD(+) + 4 H(+)(out). In terms of biological role, core subunit of the mitochondrial membrane respiratory chain NADH dehydrogenase (Complex I) which catalyzes electron transfer from NADH through the respiratory chain, using ubiquinone as an electron acceptor. Part of the enzyme membrane arm which is embedded in the lipid bilayer and involved in proton translocation. In Propithecus diadema diadema (Diademed sifaka), this protein is NADH-ubiquinone oxidoreductase chain 4L (MT-ND4L).